The chain runs to 299 residues: ATP phosphoribosyltransferase (299 aa).

Belongs to the ATP phosphoribosyltransferase family. Long subfamily. In terms of assembly, equilibrium between an active dimeric form, an inactive hexameric form and higher aggregates. Interconversion between the various forms is largely reversible and is influenced by the natural substrates and inhibitors of the enzyme. Mg(2+) serves as cofactor.

The protein localises to the cytoplasm. The catalysed reaction is 1-(5-phospho-beta-D-ribosyl)-ATP + diphosphate = 5-phospho-alpha-D-ribose 1-diphosphate + ATP. Its pathway is amino-acid biosynthesis; L-histidine biosynthesis; L-histidine from 5-phospho-alpha-D-ribose 1-diphosphate: step 1/9. Feedback inhibited by histidine. In terms of biological role, catalyzes the condensation of ATP and 5-phosphoribose 1-diphosphate to form N'-(5'-phosphoribosyl)-ATP (PR-ATP). Has a crucial role in the pathway because the rate of histidine biosynthesis seems to be controlled primarily by regulation of HisG enzymatic activity. The protein is ATP phosphoribosyltransferase of Pectobacterium atrosepticum (strain SCRI 1043 / ATCC BAA-672) (Erwinia carotovora subsp. atroseptica).